A 1084-amino-acid polypeptide reads, in one-letter code: Cellulose synthase A catalytic subunit 6 [UDP-forming] (1084 aa).

The residue at position 1 (Met1) is an N-acetylmethionine. Over 1-277 the chain is Cytoplasmic; the sequence is MNTGGRLIAG…KSSKINPYRM (277 aa). Positions 39, 42, 58, 61, 66, 69, 81, and 84 each coordinate Zn(2+). An RING-type; degenerate zinc finger spans residues 39–85; the sequence is CQICRDEIELTVDGEPFVACNECAFPVCRPCYEYERREGNQACPQCK. A helical membrane pass occupies residues 278–298; sequence LIVLRLVILGLFFHYRILHPV. The Extracellular portion of the chain corresponds to 299 to 300; it reads KD. A helical membrane pass occupies residues 301-321; it reads AYALWLISVICEIWFAVSWVL. Residues 322-868 lie on the Cytoplasmic side of the membrane; that stretch reads DQFPKWYPIE…INSVVYPWTS (547 aa). Residues Ser360, Lys366, Glu367, and Asp396 each coordinate UDP-alpha-D-glucose. Asp396 is a catalytic residue. Positions 450-476 form a coiled coil; sequence VRERRAMKRDYEEFKVKINALVATAQK. Residue Lys537 coordinates UDP-alpha-D-glucose. Mn(2+) contacts are provided by Lys538 and Asp562. Residues 675 to 703 are a coiled coil; it reads RKAKTVAADKKKKNREASKQIHALENIEE. Residue Asp785 is part of the active site. Residues 869 to 889 form a helical membrane-spanning segment; sequence LPLIVYCSLPAICLLTGKFIV. Over 890–894 the chain is Extracellular; sequence PEISN. A helical membrane pass occupies residues 895–915; it reads YASILFMALFSSIAITGILEM. The Cytoplasmic segment spans residues 916–930; sequence QWGKVGIDDWWRNEQ. A helical transmembrane segment spans residues 931–951; that stretch reads FWVIGGVSAHLFALFQGLLKV. Residues 952 to 980 are Extracellular-facing; sequence LAGVDTNFTVTSKAADDGEFSDLYLFKWT. Asn958 carries N-linked (GlcNAc...) asparagine glycosylation. A helical membrane pass occupies residues 981–1001; sequence SLLIPPMTLLIINVIGVIVGV. Topologically, residues 1002 to 1012 are cytoplasmic; sequence SDAISNGYDSW. Residues 1013–1033 form a helical membrane-spanning segment; sequence GPLFGRLFFALWVIIHLYPFL. Residues 1034-1042 lie on the Extracellular side of the membrane; it reads KGLLGKQDR. A helical membrane pass occupies residues 1043-1063; the sequence is MPTIIVVWSILLASILTLLWV. The Cytoplasmic segment spans residues 1064 to 1084; it reads RVNPFVAKGGPILEICGLDCL.

Belongs to the glycosyltransferase 2 family. Plant cellulose synthase subfamily. Interacts with CESA1 and CESA3. Interacts with STL1 and STL2, but not with GOT1. Binds to CSI1 and CSI3. Interacts with PAT24/TIP1. The cofactor is Zn(2+). Mn(2+) serves as cofactor. In terms of processing, S-acylated. As to expression, expressed in germinating seeds, seedlings, roots, stems, leaves and flowers. Not present in mature flowers.

It is found in the cell membrane. It catalyses the reaction [(1-&gt;4)-beta-D-glucosyl](n) + UDP-alpha-D-glucose = [(1-&gt;4)-beta-D-glucosyl](n+1) + UDP + H(+). Its pathway is glycan metabolism; plant cellulose biosynthesis. Functionally, catalytic subunit of cellulose synthase terminal complexes ('rosettes'), required for beta-1,4-glucan microfibril crystallization, a major mechanism of the cell wall formation. Involved in the primary cell wall formation. The presence of each protein CESA1 and CESA6 is critical for cell expansion. The hypocotyl elongation is based on a CESA6-dependent cell elongation in dark and a CESA6-independent cell elongation in light. The transition between these two mechanisms requires photosynthesis and PHYB, but not CRY1. The CESA6-dependent cell elongation seems to be independent of gibberellic acid, auxin and ethylene. May be involved in sensitivity to isoxaben. Associates with and moves along cortical microtubules for the process of cellulose deposition. In Arabidopsis thaliana (Mouse-ear cress), this protein is Cellulose synthase A catalytic subunit 6 [UDP-forming].